Consider the following 719-residue polypeptide: Eukaryotic translation initiation factor 3 subunit B (719 aa).

The 88-residue stretch at 60 to 147 (NILVVDNLPV…HIFAVNMFDD (88 aa)) folds into the RRM domain. WD repeat units follow at residues 167 to 207 (VPGE…KPEL), 511 to 553 (LKGK…TMAS), and 555 to 598 (EHFM…LYRI). A compositionally biased stretch (basic and acidic residues) spans 675–686 (EKMERQKLRDGE). A disordered region spans residues 675–698 (EKMERQKLRDGEASDEEEEYEAKE). The span at 687-698 (ASDEEEEYEAKE) shows a compositional bias: acidic residues.

This sequence belongs to the eIF-3 subunit B family. Component of the eukaryotic translation initiation factor 3 (eIF-3) complex.

The protein resides in the cytoplasm. Functionally, RNA-binding component of the eukaryotic translation initiation factor 3 (eIF-3) complex, which is involved in protein synthesis of a specialized repertoire of mRNAs and, together with other initiation factors, stimulates binding of mRNA and methionyl-tRNAi to the 40S ribosome. The eIF-3 complex specifically targets and initiates translation of a subset of mRNAs involved in cell proliferation. The polypeptide is Eukaryotic translation initiation factor 3 subunit B (TIF3B1) (Nicotiana tabacum (Common tobacco)).